Consider the following 149-residue polypeptide: D-aminoacyl-tRNA deacylase (149 aa).

The short motif at 137 to 138 (GP) is the Gly-cisPro motif, important for rejection of L-amino acids element.

Belongs to the DTD family. Homodimer.

It localises to the cytoplasm. It carries out the reaction glycyl-tRNA(Ala) + H2O = tRNA(Ala) + glycine + H(+). It catalyses the reaction a D-aminoacyl-tRNA + H2O = a tRNA + a D-alpha-amino acid + H(+). Its function is as follows. An aminoacyl-tRNA editing enzyme that deacylates mischarged D-aminoacyl-tRNAs. Also deacylates mischarged glycyl-tRNA(Ala), protecting cells against glycine mischarging by AlaRS. Acts via tRNA-based rather than protein-based catalysis; rejects L-amino acids rather than detecting D-amino acids in the active site. By recycling D-aminoacyl-tRNA to D-amino acids and free tRNA molecules, this enzyme counteracts the toxicity associated with the formation of D-aminoacyl-tRNA entities in vivo and helps enforce protein L-homochirality. The sequence is that of D-aminoacyl-tRNA deacylase from Clostridium novyi (strain NT).